Consider the following 616-residue polypeptide: Glutamine--fructose-6-phosphate aminotransferase [isomerizing] (616 aa).

C2 (nucleophile; for GATase activity) is an active-site residue. The 221-residue stretch at C2–D222 folds into the Glutamine amidotransferase type-2 domain. Residues T70–H89 form a disordered region. SIS domains follow at residues I289–F428 and L461–P606. The For Fru-6P isomerization activity role is filled by K611.

Homodimer.

Its subcellular location is the cytoplasm. It catalyses the reaction D-fructose 6-phosphate + L-glutamine = D-glucosamine 6-phosphate + L-glutamate. In terms of biological role, catalyzes the first step in hexosamine metabolism, converting fructose-6P into glucosamine-6P using glutamine as a nitrogen source. This is Glutamine--fructose-6-phosphate aminotransferase [isomerizing] from Tropheryma whipplei (strain Twist) (Whipple's bacillus).